The sequence spans 303 residues: Major fimbrium anchoring subunit FimB (303 aa).

The first 22 residues, methionine 1–glycine 22, serve as a signal peptide directing secretion. Cysteine 23 carries the N-palmitoyl cysteine lipid modification. The S-diacylglycerol cysteine moiety is linked to residue cysteine 23.

Belongs to the bacteroidetes fimbrillin superfamily. FimB/Mfa2 family. In terms of assembly, fimB is not part of the fimbrium itself, but anchors the fimbrium in the outer membrane. Linear, head-to-tail oligomerization of fimbrial subunits mediates assembly of the fimbrium stalk, while the minor components FimC, FimD and FimE probably form the fimbrium tip. The anchoring subunit FimB limits fimbrium length and is important for solid fimbrium attachment to the outer membrane. In its absence, the major fimbriae become very long and are easily detached from the membrane.

It localises to the cell outer membrane. Its function is as follows. Anchoring subunit of the major fimbriae. Regulates fimbrial length. These filamentous pili are attached to the cell surface; they mediate biofilm formation, adhesion onto host cells and onto other bacteria that are part of the oral microbiome. Fimbriae of P.gingivalis are major virulence factors. The polypeptide is Major fimbrium anchoring subunit FimB (Porphyromonas gingivalis (strain ATCC BAA-308 / W83)).